The primary structure comprises 319 residues: Nuclear hormone receptor family member nhr-174 (319 aa).

A DNA-binding region (nuclear receptor) is located at residues 7-81 (DPVCPVCEFP…AGMKRNLVRQ (75 aa)). 2 consecutive NR C4-type zinc fingers follow at residues 10 to 31 (CPVC…CGAC) and 47 to 63 (CEKK…CRAC). The NR LBD domain occupies 130–319 (EAEKDVSKIL…SMKKSRYLQF (190 aa)).

The protein belongs to the nuclear hormone receptor family.

Its subcellular location is the nucleus. Orphan nuclear receptor. The protein is Nuclear hormone receptor family member nhr-174 (nhr-174) of Caenorhabditis elegans.